We begin with the raw amino-acid sequence, 444 residues long: CCA-adding enzyme (444 aa).

ATP contacts are provided by Ser57 and Arg60. Residues Ser57 and Arg60 each coordinate CTP. Positions 69, 71, and 124 each coordinate Mg(2+). 3 residues coordinate ATP: His147, Lys168, and Tyr177. 3 residues coordinate CTP: His147, Lys168, and Tyr177.

It belongs to the tRNA nucleotidyltransferase/poly(A) polymerase family. Archaeal CCA-adding enzyme subfamily. In terms of assembly, homodimer. Mg(2+) is required as a cofactor.

It catalyses the reaction a tRNA precursor + 2 CTP + ATP = a tRNA with a 3' CCA end + 3 diphosphate. The catalysed reaction is a tRNA with a 3' CCA end + 2 CTP + ATP = a tRNA with a 3' CCACCA end + 3 diphosphate. Catalyzes the addition and repair of the essential 3'-terminal CCA sequence in tRNAs without using a nucleic acid template. Adds these three nucleotides in the order of C, C, and A to the tRNA nucleotide-73, using CTP and ATP as substrates and producing inorganic pyrophosphate. tRNA 3'-terminal CCA addition is required both for tRNA processing and repair. Also involved in tRNA surveillance by mediating tandem CCA addition to generate a CCACCA at the 3' terminus of unstable tRNAs. While stable tRNAs receive only 3'-terminal CCA, unstable tRNAs are marked with CCACCA and rapidly degraded. The chain is CCA-adding enzyme from Methanococcus maripaludis (strain C5 / ATCC BAA-1333).